The primary structure comprises 293 residues: MQAFIGTGVALVTPFKKDFSVDTQALKRIVNYVIDGGVEYLVVLGTTAESATLSQDEKELVIATIVDANNGRLPLVLGIGGNNTMKVVEELKTRDFSKFSAVLSVSPYYNKPTQEGIYQHFKMVAEASPIPVILYNVPGRTASNMLPETVLRLAKDFKNLIGIKEAAGDIVQAMKLIQGKPKDFLVISGDDMITLPMILAGGSGVISVIGEGYPKEFSQMVRLGLQRKVDEAYILHYKLMNSIDMIFEQGNPSGVKEIFKSLGLSENTVRLPLVSVNEDLSNRLDLFTKQLSK.

Thr-47 is a binding site for pyruvate. Tyr-135 (proton donor/acceptor) is an active-site residue. Residue Lys-164 is the Schiff-base intermediate with substrate of the active site. Ile-206 serves as a coordination point for pyruvate.

The protein belongs to the DapA family. In terms of assembly, homotetramer; dimer of dimers.

It localises to the cytoplasm. It carries out the reaction L-aspartate 4-semialdehyde + pyruvate = (2S,4S)-4-hydroxy-2,3,4,5-tetrahydrodipicolinate + H2O + H(+). It functions in the pathway amino-acid biosynthesis; L-lysine biosynthesis via DAP pathway; (S)-tetrahydrodipicolinate from L-aspartate: step 3/4. Its function is as follows. Catalyzes the condensation of (S)-aspartate-beta-semialdehyde [(S)-ASA] and pyruvate to 4-hydroxy-tetrahydrodipicolinate (HTPA). The sequence is that of 4-hydroxy-tetrahydrodipicolinate synthase from Flavobacterium psychrophilum (strain ATCC 49511 / DSM 21280 / CIP 103535 / JIP02/86).